Consider the following 374-residue polypeptide: Gibberellin 3-beta-dioxygenase 1 (374 aa).

The 102-residue stretch at lysine 206–proline 307 folds into the Fe2OG dioxygenase domain. Residues histidine 231, aspartate 233, and histidine 288 each contribute to the Fe cation site. Arginine 298 is a catalytic residue. Arginine 298 contacts 2-oxoglutarate.

Belongs to the iron/ascorbate-dependent oxidoreductase family. GA3OX subfamily. Requires L-ascorbate as cofactor. Fe(2+) is required as a cofactor. In terms of tissue distribution, expressed in radicles, roots, internodes, cotyledons, leaves and shoots. Barely detected in developing seeds. Not detected in flowers or young fruits.

The enzyme catalyses gibberellin A20 + 2-oxoglutarate + O2 = gibberellin A1 + succinate + CO2. It participates in plant hormone biosynthesis; gibberellin biosynthesis. Converts the inactive gibberellin (GA) precursors GA9 and GA20 in the bioactives gibberellins GA4 and GA1. Has a small activity on GA29, producing GA8. Unable to convert GA20 to GA5, GA5 to GA3 or GA12 to GA14. Involved in the production of bioactive GA for vegetative growth and development, but not for the 3-beta-hydroxylation of GA in developing seeds. This Pisum sativum (Garden pea) protein is Gibberellin 3-beta-dioxygenase 1 (LE).